The chain runs to 571 residues: UvrABC system protein C (571 aa).

The 79-residue stretch at 15 to 93 (TSPGVYLWKD…VDRFNPEFNI (79 aa)) folds into the GIY-YIG domain. Residues 184–219 (NNYLNELTNKMHTAANNMQFELALFLRDGLTYLKKL) enclose the UVR domain.

Belongs to the UvrC family. Interacts with UvrB in an incision complex.

It is found in the cytoplasm. The UvrABC repair system catalyzes the recognition and processing of DNA lesions. UvrC both incises the 5' and 3' sides of the lesion. The N-terminal half is responsible for the 3' incision and the C-terminal half is responsible for the 5' incision. The sequence is that of UvrABC system protein C from Mycoplasmopsis agalactiae (strain NCTC 10123 / CIP 59.7 / PG2) (Mycoplasma agalactiae).